A 440-amino-acid polypeptide reads, in one-letter code: Protein arginine N-methyltransferase 2 (440 aa).

Residues 147-194 are disordered; sequence LSSGSEDGDEEMEVQQDDDEEAPQLVSTEDVEPTVEEPKFIPPDAKEK. Acidic residues predominate over residues 152-168; sequence EDGDEEMEVQQDDDEEA. Basic and acidic residues predominate over residues 182-194; that stretch reads EEPKFIPPDAKEK. The region spanning 192–440 is the RMT2 domain; the sequence is KEKQVTSEEY…RYAVGTSNRL (249 aa). Residues Tyr201, Met230, 252–257, 273–275, 310–311, and Asp330 contribute to the S-adenosyl-L-methionine site; these read FGMGIV, EAH, and WQ.

It belongs to the class I-like SAM-binding methyltransferase superfamily. RMT2 methyltransferase family. As to quaternary structure, monomer.

It is found in the cytoplasm. It localises to the nucleus. In terms of biological role, S-adenosyl-L-methionine-dependent protein-arginine N-methyltransferase that methylates the delta-nitrogen atom of arginine residues to form N5-methylarginine (type IV) in target proteins. Monomethylates ribosomal protein L12. The sequence is that of Protein arginine N-methyltransferase 2 from Gibberella zeae (strain ATCC MYA-4620 / CBS 123657 / FGSC 9075 / NRRL 31084 / PH-1) (Wheat head blight fungus).